The sequence spans 492 residues: ATP synthase subunit beta, chloroplastic (492 aa).

Residue 170-177 coordinates ATP; that stretch reads GGAGVGKT.

This sequence belongs to the ATPase alpha/beta chains family. In terms of assembly, F-type ATPases have 2 components, CF(1) - the catalytic core - and CF(0) - the membrane proton channel. CF(1) has five subunits: alpha(3), beta(3), gamma(1), delta(1), epsilon(1). CF(0) has four main subunits: a(1), b(1), b'(1) and c(9-12).

Its subcellular location is the plastid. It localises to the chloroplast thylakoid membrane. The enzyme catalyses ATP + H2O + 4 H(+)(in) = ADP + phosphate + 5 H(+)(out). In terms of biological role, produces ATP from ADP in the presence of a proton gradient across the membrane. The catalytic sites are hosted primarily by the beta subunits. The chain is ATP synthase subunit beta, chloroplastic from Angiopteris lygodiifolia (Turnip fern).